Here is a 232-residue protein sequence, read N- to C-terminus: Phosphoribosylformylglycinamidine synthase subunit PurQ (232 aa).

One can recognise a Glutamine amidotransferase type-1 domain in the interval 2–232 (KIAIIQFGGT…SMADYITENF (231 aa)). C86 acts as the Nucleophile in catalysis. Residues H203 and E205 contribute to the active site.

As to quaternary structure, part of the FGAM synthase complex composed of 1 PurL, 1 PurQ and 2 PurS subunits.

The protein localises to the cytoplasm. It carries out the reaction N(2)-formyl-N(1)-(5-phospho-beta-D-ribosyl)glycinamide + L-glutamine + ATP + H2O = 2-formamido-N(1)-(5-O-phospho-beta-D-ribosyl)acetamidine + L-glutamate + ADP + phosphate + H(+). The enzyme catalyses L-glutamine + H2O = L-glutamate + NH4(+). The protein operates within purine metabolism; IMP biosynthesis via de novo pathway; 5-amino-1-(5-phospho-D-ribosyl)imidazole from N(2)-formyl-N(1)-(5-phospho-D-ribosyl)glycinamide: step 1/2. Part of the phosphoribosylformylglycinamidine synthase complex involved in the purines biosynthetic pathway. Catalyzes the ATP-dependent conversion of formylglycinamide ribonucleotide (FGAR) and glutamine to yield formylglycinamidine ribonucleotide (FGAM) and glutamate. The FGAM synthase complex is composed of three subunits. PurQ produces an ammonia molecule by converting glutamine to glutamate. PurL transfers the ammonia molecule to FGAR to form FGAM in an ATP-dependent manner. PurS interacts with PurQ and PurL and is thought to assist in the transfer of the ammonia molecule from PurQ to PurL. This is Phosphoribosylformylglycinamidine synthase subunit PurQ from Methanosarcina acetivorans (strain ATCC 35395 / DSM 2834 / JCM 12185 / C2A).